A 315-amino-acid polypeptide reads, in one-letter code: MENVYDLAIIGSGPAGLAAALYGARAKMKTIMIEGQKVGGQIVITHEVANYPGSVREATGPSLIERMEEQANEFGAEKVMDKIVDVDLDGKIKVIKGEKAEYKAKSVILATGAAPRLAGCPGEQELTGKGVSYCATCDADFFEDMEVFVVGGGDTAVEEAMYLAKFARKVTIVHRRDELRAAKSIQEKAFKNPKLDFMWNSAIEEIKGDGIVESAVFKNLVTGETTEYFANEEDGTFGIFVFIGYIPKSDVFKGKITLDDAGYIITDDNMKTNVEGVFAAGDIRVKSLRQVVTACADGAIAATQAEKYVEANFEE.

34–41 (EGQKVGGQ) is a binding site for FAD. A disulfide bond links Cys-134 and Cys-137. 282 to 291 (DIRVKSLRQV) contributes to the FAD binding site.

This sequence belongs to the class-II pyridine nucleotide-disulfide oxidoreductase family. Homodimer. The cofactor is FAD.

The protein resides in the cytoplasm. It carries out the reaction [thioredoxin]-dithiol + NADP(+) = [thioredoxin]-disulfide + NADPH + H(+). The sequence is that of Thioredoxin reductase (trxB) from Peptoclostridium acidaminophilum (Eubacterium acidaminophilum).